Here is a 679-residue protein sequence, read N- to C-terminus: Sodium-dependent phosphate transporter 1 (679 aa).

6 consecutive transmembrane segments (helical) span residues 21–41, 62–82, 100–120, 158–178, 203–223, and 230–250; these read YLWM…SVGA, ACIL…AKVS, GLLM…QLVA, IVMS…ILFF, ACTV…LLGF, and GTIL…WFFV. Ser265 and Ser269 each carry phosphoserine. Residues 268 to 288 are disordered; the sequence is ESPLMEKKNSLKEDHEETKLS. A compositionally biased stretch (basic and acidic residues) spans 271 to 286; that stretch reads LMEKKNSLKEDHEETK. 4 helical membrane-spanning segments follow: residues 511 to 531, 558 to 578, 600 to 620, and 650 to 670; these read VSLL…FAHG, VATP…GLWV, FSIE…GLPI, and IFMA…AIMA. Residues 550-558 form an a region; the sequence is DTGDVSSKV.

This sequence belongs to the inorganic phosphate transporter (PiT) (TC 2.A.20) family.

It localises to the cell membrane. The catalysed reaction is 2 Na(+)(out) + phosphate(out) = 2 Na(+)(in) + phosphate(in). Sodium-phosphate symporter which preferentially transports the monovalent form of phosphate with a stoichiometry of two sodium ions per phosphate ion. May play a role in extracellular matrix and cartilage calcification as well as in vascular calcification. Essential for cell proliferation but this function is independent of its phosphate transporter activity. The protein is Sodium-dependent phosphate transporter 1 (SLC20A1) of Pongo abelii (Sumatran orangutan).